The chain runs to 310 residues: UDP-N-acetylenolpyruvoylglucosamine reductase (310 aa).

The region spanning arginine 35–glycine 203 is the FAD-binding PCMH-type domain. Arginine 183 is an active-site residue. Serine 232 functions as the Proton donor in the catalytic mechanism. Glutamate 302 is an active-site residue.

Belongs to the MurB family. FAD serves as cofactor.

It localises to the cytoplasm. The catalysed reaction is UDP-N-acetyl-alpha-D-muramate + NADP(+) = UDP-N-acetyl-3-O-(1-carboxyvinyl)-alpha-D-glucosamine + NADPH + H(+). Its pathway is cell wall biogenesis; peptidoglycan biosynthesis. In terms of biological role, cell wall formation. The polypeptide is UDP-N-acetylenolpyruvoylglucosamine reductase (Myxococcus xanthus (strain DK1622)).